The following is a 180-amino-acid chain: MELKSTLLDDKAIKRTLIRISHEIIERNKGVEDIVLIGIKRRGYPLAQRIADQIEGIEGRKVDVGYVDITLYRDDLTIVEKDPTVKSIDIETSIKDKKVILVDDVLYTCRTVRAAIDAVMDLDRPEGIQLAVLIDRGHKELPIRADYVGKNIPTSKNEVIKVMLNEIDGEDSVKIYDSIN.

The short motif at 99–111 (VILVDDVLYTCRT) is the PRPP-binding element.

The protein belongs to the purine/pyrimidine phosphoribosyltransferase family. PyrR subfamily. As to quaternary structure, homodimer and homohexamer; in equilibrium.

It carries out the reaction UMP + diphosphate = 5-phospho-alpha-D-ribose 1-diphosphate + uracil. Regulates transcriptional attenuation of the pyrimidine nucleotide (pyr) operon by binding in a uridine-dependent manner to specific sites on pyr mRNA. This disrupts an antiterminator hairpin in the RNA and favors formation of a downstream transcription terminator, leading to a reduced expression of downstream genes. In terms of biological role, also displays a weak uracil phosphoribosyltransferase activity which is not physiologically significant. The protein is Bifunctional protein PyrR of Clostridium botulinum (strain Alaska E43 / Type E3).